We begin with the raw amino-acid sequence, 79 residues long: uncharacterized protein (79 aa).

The N-terminal stretch at 1–33 (MRLIIRAIVLLALVWIGLLMSGYGILVGSKVNA) is a signal peptide.

This is an uncharacterized protein from Salmonella typhi.